Consider the following 159-residue polypeptide: Eukaryotic translation initiation factor 5A (159 aa).

A compositionally biased stretch (basic and acidic residues) spans 1–12 (MSDEEHQFESKA). Residues 1–23 (MSDEEHQFESKADAGASKTYPQQ) are disordered. Lys-52 is modified (hypusine).

It belongs to the eIF-5A family. In terms of processing, lys-52 undergoes hypusination, a unique post-translational modification that consists in the addition of a butylamino group from spermidine to lysine side chain, leading to the formation of the unusual amino acid hypusine. eIF-5As are the only known proteins to undergo this modification, which is essential for their function.

In terms of biological role, translation factor that promotes translation elongation and termination, particularly upon ribosome stalling at specific amino acid sequence contexts. Binds between the exit (E) and peptidyl (P) site of the ribosome and promotes rescue of stalled ribosome: specifically required for efficient translation of polyproline-containing peptides as well as other motifs that stall the ribosome. Acts as a ribosome quality control (RQC) cofactor by joining the RQC complex to facilitate peptidyl transfer during CAT tailing step. The sequence is that of Eukaryotic translation initiation factor 5A (EIFSV1) from Senecio vernalis (Spring groundsel).